We begin with the raw amino-acid sequence, 475 residues long: Putative aldehyde dehydrogenase SERP1729 (475 aa).

201-207 contributes to the NAD(+) binding site; that stretch reads GDGSGVG. Catalysis depends on residues glutamate 245 and cysteine 279.

This sequence belongs to the aldehyde dehydrogenase family.

The enzyme catalyses an aldehyde + NAD(+) + H2O = a carboxylate + NADH + 2 H(+). The chain is Putative aldehyde dehydrogenase SERP1729 from Staphylococcus epidermidis (strain ATCC 35984 / DSM 28319 / BCRC 17069 / CCUG 31568 / BM 3577 / RP62A).